The chain runs to 317 residues: Melanocyte-stimulating hormone receptor (317 aa).

The Extracellular portion of the chain corresponds to 1–37 (MPMQEPQRRLLGPFNSTRTGAPHLELSANQTGPWCLH). 2 N-linked (GlcNAc...) asparagine glycosylation sites follow: N15 and N29. A helical membrane pass occupies residues 38–63 (VSIPDGLFLSLGLVSLVENVLVVISI). The Cytoplasmic portion of the chain corresponds to 64–72 (AKNQNLHSP). The helical transmembrane segment at 73-93 (MYYFICCLALSDLLVSVSIVL) threads the bilayer. Residues 94 to 118 (ETTLILVLEAGALATRVTVVQQLDN) lie on the Extracellular side of the membrane. The chain crosses the membrane as a helical span at residues 119–140 (VIDVLICASMVSSLCFLGAIAV). At 141 to 163 (DRYISIFYALRYHSIVTLPRARW) the chain is on the cytoplasmic side. The chain crosses the membrane as a helical span at residues 164–183 (AIVAIWVASISSSTLFVAYY). Residues 184–191 (NHTAVLLC) lie on the Extracellular side of the membrane. A helical transmembrane segment spans residues 192 to 211 (LVTFFLATLALMVVLYVHML). Topologically, residues 212-240 (ARAHQHAQAIAQLHKRQHLVHQGFRLKGA) are cytoplasmic. Residues 241–266 (ATLTILLGIFFLCWGPFFLYLTLIVL) traverse the membrane as a helical segment. Over 267-279 (CPKHPTCGCFFKN) the chain is Extracellular. The chain crosses the membrane as a helical span at residues 280-300 (LNLFLALIIFNSIVDPLIYAF). Topologically, residues 301 to 317 (RSQELRMTLKEVLLCSW) are cytoplasmic. C315 is lipidated: S-palmitoyl cysteine.

The protein belongs to the G-protein coupled receptor 1 family. As to quaternary structure, interacts with MGRN1, but does not undergo MGRN1-mediated ubiquitination; this interaction competes with GNAS-binding and thus inhibits agonist-induced cAMP production. Interacts with OPN3; the interaction results in a decrease in MC1R-mediated cAMP signaling and ultimately a decrease in melanin production in melanocytes.

The protein localises to the cell membrane. Its function is as follows. Receptor for MSH (alpha, beta and gamma) and ACTH. The activity of this receptor is mediated by G proteins which activate adenylate cyclase. Mediates melanogenesis, the production of eumelanin (black/brown) and phaeomelanin (red/yellow), via regulation of cAMP signaling in melanocytes. This is Melanocyte-stimulating hormone receptor (MC1R) from Chaetodipus penicillatus (Desert pocket mouse).